The following is a 257-amino-acid chain: Putative pentatricopeptide repeat-containing protein At1g43010 (257 aa).

PPR repeat units lie at residues 133-168 (KMRD…GFLL) and 169-203 (KPYL…NMEV).

The protein belongs to the PPR family. P subfamily.

This Arabidopsis thaliana (Mouse-ear cress) protein is Putative pentatricopeptide repeat-containing protein At1g43010.